The chain runs to 216 residues: Octanoyltransferase (216 aa).

The region spanning 35–213 (NSNPDFIWIG…TIEEEFNFDF (179 aa)) is the BPL/LPL catalytic domain. Residues 77–84 (RGGEVTCH), 144–146 (SIG), and 157–159 (GFS) each bind substrate. C175 serves as the catalytic Acyl-thioester intermediate.

It belongs to the LipB family.

It is found in the cytoplasm. It carries out the reaction octanoyl-[ACP] + L-lysyl-[protein] = N(6)-octanoyl-L-lysyl-[protein] + holo-[ACP] + H(+). The protein operates within protein modification; protein lipoylation via endogenous pathway; protein N(6)-(lipoyl)lysine from octanoyl-[acyl-carrier-protein]: step 1/2. Catalyzes the transfer of endogenously produced octanoic acid from octanoyl-acyl-carrier-protein onto the lipoyl domains of lipoate-dependent enzymes. Lipoyl-ACP can also act as a substrate although octanoyl-ACP is likely to be the physiological substrate. The protein is Octanoyltransferase of Prochlorococcus marinus (strain MIT 9301).